The chain runs to 265 residues: Capsule polysaccharide export inner-membrane protein BexB (265 aa).

6 helical membrane passes run 37 to 57, 64 to 84, 118 to 138, 151 to 171, 178 to 198, and 235 to 255; these read IGFF…VMMW, KFST…AMMW, LLEV…LVMI, LIAW…ICAI, FGKI…AFFF, and ESIG…LVMV. The 222-residue stretch at 37–258 folds into the ABC transmembrane type-2 domain; it reads IGFFWLFVEP…LLGLVMVKNF (222 aa).

This sequence belongs to the ABC-2 integral membrane protein family.

The protein resides in the cell inner membrane. May form an ATP-driven capsule polysaccharide export apparatus, in association with the BexA, BexC and BexD proteins. This Haemophilus influenzae protein is Capsule polysaccharide export inner-membrane protein BexB (bexB).